Here is a 436-residue protein sequence, read N- to C-terminus: Trigger factor (436 aa).

Residues 161–246 (EDQLNIDFVG…VNTVSEPKLP (86 aa)) enclose the PPIase FKBP-type domain.

The protein belongs to the FKBP-type PPIase family. Tig subfamily.

The protein localises to the cytoplasm. It carries out the reaction [protein]-peptidylproline (omega=180) = [protein]-peptidylproline (omega=0). Involved in protein export. Acts as a chaperone by maintaining the newly synthesized protein in an open conformation. Functions as a peptidyl-prolyl cis-trans isomerase. The chain is Trigger factor from Pseudomonas syringae pv. syringae (strain B728a).